The chain runs to 377 residues: uncharacterized protein (377 aa).

The helical transmembrane segment at 21-43 threads the bilayer; it reads YFISFSALFLIAYMFVAAVPLGA.

It is found in the membrane. This is an uncharacterized protein from Treponema pallidum (strain Nichols).